The following is a 203-amino-acid chain: Elongation factor Ts (203 aa).

Residues 80 to 83 (TDFV) form an involved in Mg(2+) ion dislocation from EF-Tu region.

Belongs to the EF-Ts family.

The protein localises to the cytoplasm. In terms of biological role, associates with the EF-Tu.GDP complex and induces the exchange of GDP to GTP. It remains bound to the aminoacyl-tRNA.EF-Tu.GTP complex up to the GTP hydrolysis stage on the ribosome. The polypeptide is Elongation factor Ts (Moorella thermoacetica (strain ATCC 39073 / JCM 9320)).